The following is a 430-amino-acid chain: Histone acetyltransferase type B subunit 2 (430 aa).

WD repeat units follow at residues 129-169 (PHDG…ALTT), 180-220 (GHTA…FTSS), 233-273 (RHTD…EEEA), 279-319 (AHSK…QRLH), and 323-363 (GHED…EEQT). The segment at 365 to 369 (EDAED) is interaction with the histone H4 N-terminus. Residues 380 to 420 (GHTNRISEFSWCPNERWVVGSLADDNILQIWSPSRVIWGRD) form a WD 6 repeat. Ser-425 carries the phosphoserine modification.

It belongs to the WD repeat RBAP46/RBAP48/MSI1 family. As to quaternary structure, component of the HAT-B complex composed of at least hat1 and hat2. The HAT-B complex binds to histone H4 tail. Component of the CENP-A recruiting complex composed of at least mis16, mis19, mis19 and mis20.

It localises to the cytoplasm. The protein resides in the nucleus. It is found in the chromosome. Its subcellular location is the centromere. The protein localises to the kinetochore. Functionally, regulatory subunit of the histone acetylase B (HAT-B) complex. The complex acetylates 'Lys-12' of histone H4 which is required for telomeric silencing. Component of the CENP-A recruiting complex that ensures the integrity of mitotic spindles through maintenance of kinetochore factors mis6/CENP-I and cnp1/CENP-A. Maintains the deacetylated state of histones specifically in the central core of the centromeres. This is Histone acetyltransferase type B subunit 2 (mis16) from Schizosaccharomyces pombe (strain 972 / ATCC 24843) (Fission yeast).